A 73-amino-acid polypeptide reads, in one-letter code: Translational regulator CsrA (73 aa).

This sequence belongs to the CsrA/RsmA family. Homodimer; the beta-strands of each monomer intercalate to form a hydrophobic core, while the alpha-helices form wings that extend away from the core.

The protein resides in the cytoplasm. Its function is as follows. A translational regulator that binds mRNA to regulate translation initiation and/or mRNA stability. Usually binds in the 5'-UTR at or near the Shine-Dalgarno sequence preventing ribosome-binding, thus repressing translation. Its main target seems to be the major flagellin gene, while its function is anatagonized by FliW. This is Translational regulator CsrA from Clostridium kluyveri (strain NBRC 12016).